We begin with the raw amino-acid sequence, 429 residues long: MDVTSTLSLGDPLEPARKATADMLRSRDHSFSLPQPFYCDQRLFEIDMQEIFHKEWLIAGMTCEIPAKGNFLTLQIGKNPVLVIRGAEGQVHAFHNVCRHRGSRLCVSEKGKVAKLVCPYHQWTYELDGRLLFAGTEMGADFDMKEYGLKPIQVKTAGGYIFISLAENPPAIDDFLATLEHYMEPYDMENAKVAVQTTIREAANWKLVIENNRECYHCNGSHPELLKTLLEWDDVTDPRASQAFKDQVAACTSAWDAEKIPYAHASFGLRNRIVRMPLLDGTVSMTMDGKQGSKKLMGRIKNPDLGSMRILHLPHSWNHCMGDHLIVFTVWPISAQETLVTTKWLVHKDAVEGVDYDVARLREVWDATNDQDRRLAEENQRGINSDAYQPGPYSKTYEFGVINFLDWYSERMLNNLGEESAHVRKVAGS.

In terms of domain architecture, Rieske spans 56–163 (WLIAGMTCEI…VKTAGGYIFI (108 aa)). [2Fe-2S] cluster contacts are provided by cysteine 98, histidine 100, cysteine 118, and histidine 121. Fe cation contacts are provided by histidine 217 and histidine 222.

This sequence belongs to the bacterial ring-hydroxylating dioxygenase alpha subunit family. As to quaternary structure, the system is composed of an oxygenase subunit (GbcA) and a reductase subunit (GbcB). [2Fe-2S] cluster is required as a cofactor. Fe cation serves as cofactor.

It carries out the reaction glycine betaine + NADH + O2 + H(+) = N,N-dimethylglycine + formaldehyde + NAD(+) + H2O. Its function is as follows. Involved in degradation of glycine betaine. Part of a Rieske-type oxygenase system that catalyzes the conversion of glycine betaine (GB) to dimethylglycine (DMG). This subunit is the terminal oxygenase component of the system. Required for growth on choline and GB, but not for growth on DMG. In Pseudomonas aeruginosa (strain ATCC 15692 / DSM 22644 / CIP 104116 / JCM 14847 / LMG 12228 / 1C / PRS 101 / PAO1), this protein is Glycine betaine monooxygenase oxygenase subunit.